Reading from the N-terminus, the 349-residue chain is Isopentenyl-diphosphate delta-isomerase (349 aa).

6-7 (RK) is a binding site for substrate. FMN is bound by residues 62–64 (AMT), Ser93, and Asn122. Position 152 (Gln152) interacts with substrate. Glu153 contacts Mg(2+). Residues Lys184, Thr214, 258 to 259 (GG), and 280 to 281 (AG) contribute to the FMN site.

The protein belongs to the IPP isomerase type 2 family. Homooctamer. Dimer of tetramers. The cofactor is FMN. NADPH serves as cofactor. Requires Mg(2+) as cofactor.

The protein resides in the cytoplasm. The catalysed reaction is isopentenyl diphosphate = dimethylallyl diphosphate. Involved in the biosynthesis of isoprenoids. Catalyzes the 1,3-allylic rearrangement of the homoallylic substrate isopentenyl (IPP) to its allylic isomer, dimethylallyl diphosphate (DMAPP). The polypeptide is Isopentenyl-diphosphate delta-isomerase (Bacillus thuringiensis subsp. konkukian (strain 97-27)).